A 461-amino-acid chain; its full sequence is CUGBP Elav-like family member 3 (461 aa).

RRM domains follow at residues 7-88 (IKLF…PADS) and 95-175 (RKLF…FADT). The segment covering 345-358 (PPALVAQQPPPPPQ) has biased composition (pro residues). The disordered stretch occupies residues 345-375 (PPALVAQQPPPPPQQQQQQQQQQQQREGPDG). Low complexity predominate over residues 359–369 (QQQQQQQQQQQ). The RRM 3 domain maps to 376–454 (CNIFIYHLPQ…KRLKVQLKRP (79 aa)).

Belongs to the CELF/BRUNOL family.

It is found in the nucleus. It localises to the cytoplasm. RNA-binding protein involved in the regulation of pre-mRNA alternative splicing. Mediates exon inclusion and/or exclusion in pre-mRNA that are subject to tissue-specific and developmentally regulated alternative splicing. Specifically activates exon 5 inclusion of cardiac isoforms of TNNT2 during heart remodeling at the juvenile to adult transition. Activates the splicing of MAPT/Tau exon 10. Binds to muscle-specific splicing enhancer (MSE) intronic sites flanking the alternative exon 5 of TNNT2 pre-mRNA. This is CUGBP Elav-like family member 3 (CELF3) from Bos taurus (Bovine).